Here is a 1252-residue protein sequence, read N- to C-terminus: Putative late blight resistance protein homolog R1B-11 (1252 aa).

Positions 543 to 566 (RYSDSLAFLKNQLQVIQTEFESLQ) form a coiled coil. 2 NB-ARC domains span residues 684-736 (SVRR…RSRI) and 786-830 (SYHV…SSEG). LRR repeat units follow at residues 955–980 (FKFL…PYLR), 998–1026 (LWNL…VWDM), 1077–1100 (LKHL…KVSS), 1103–1125 (FPKL…ADDA), 1126–1149 (FPNL…CFTD), 1187–1212 (LVII…RLSS), and 1213–1236 (LPGI…DVDA). Positions 1188–1252 (VIIKKLVLKF…VGKLNKRDML (65 aa)) constitute an HMA domain.

The protein belongs to the disease resistance NB-LRR family.

The protein resides in the cytoplasm. It is found in the membrane. In terms of biological role, confers resistance to late blight (Phytophthora infestans) races carrying the avirulence gene Avr1. Resistance proteins guard the plant against pathogens that contain an appropriate avirulence protein via an indirect interaction with this avirulence protein. That triggers a defense system including the hypersensitive response, which restricts the pathogen growth. The protein is Putative late blight resistance protein homolog R1B-11 (R1B-11) of Solanum demissum (Wild potato).